The following is a 145-amino-acid chain: 3-dehydroquinate dehydratase (145 aa).

The active-site Proton acceptor is the tyrosine 24. Asparagine 76, histidine 82, and aspartate 89 together coordinate substrate. Histidine 102 functions as the Proton donor in the catalytic mechanism. Substrate-binding positions include 103–104 and arginine 113; that span reads VS.

The protein belongs to the type-II 3-dehydroquinase family. Homododecamer.

The enzyme catalyses 3-dehydroquinate = 3-dehydroshikimate + H2O. It participates in metabolic intermediate biosynthesis; chorismate biosynthesis; chorismate from D-erythrose 4-phosphate and phosphoenolpyruvate: step 3/7. In terms of biological role, catalyzes a trans-dehydration via an enolate intermediate. The sequence is that of 3-dehydroquinate dehydratase from Herminiimonas arsenicoxydans.